The chain runs to 452 residues: MCVYKSNSNNSNPSFIFERTVQEASSNDLFLQPPVSASNTSHSSRSNSFYNLQTISPIPISGSEVRTPSLRKNSNNVSSPLDNVIPTSRSASNSTTSSLAHQEYILNPICNMQNHHHRRRTLENSVAPALDASCSIVNDENTDLSDVDMVYSRRPSSAVSLNMALLARTNSATLPSSESSPASPDLKLSRSHSHSAATRPTLNNINNTGMTTTTSNGEPNSRILRFYSYVDMLNDEKLAQANNTPTSRPPMKSQAYSCPFILKRSPPQAYSSSSATTTFSNPFIKTTELPATSPYVSPQQSARQYSNNANNNAKSPKNRSSSILFQRQSILSNVDPVANMHKNPKFQIESSDSEEEDLTMDMLDPSFPLSSSLRSSANLASNPELATQTPLSTSSSYTAIGKPMPLSTDPSYVSSSNTLSSEHELRVEKVSEVLKKKVSNGGFSTEFNSCDT.

Phosphoserine is present on residues Ser8, Ser11, Ser14, Ser56, Ser74, and Ser79. The disordered stretch occupies residues 61 to 94; that stretch reads SGSEVRTPSLRKNSNNVSSPLDNVIPTSRSASNS. Residues 64 to 81 show a composition bias toward polar residues; that stretch reads EVRTPSLRKNSNNVSSPL. Thr121 carries the phosphothreonine modification. Residues Ser145, Ser156, and Ser160 each carry the phosphoserine modification. Thr169 is modified (phosphothreonine). Ser171 is subject to Phosphoserine. The segment covering 171–182 has biased composition (polar residues); that stretch reads SATLPSSESSPA. Positions 171 to 220 are disordered; sequence SATLPSSESSPASPDLKLSRSHSHSAATRPTLNNINNTGMTTTTSNGEPN. The residue at position 173 (Thr173) is a Phosphothreonine. 2 positions are modified to phosphoserine: Ser183 and Ser189. Over residues 201 to 216 the composition is skewed to low complexity; sequence TLNNINNTGMTTTTSN. At Tyr227 the chain carries Phosphotyrosine. Ser228, Ser257, and Ser265 each carry phosphoserine. Disordered stretches follow at residues 290–321 and 348–402; these read PATSPYVSPQQSARQYSNNANNNAKSPKNRSS and IESS…AIGK. The residue at position 295 (Tyr295) is a Phosphotyrosine. Ser297, Ser320, and Ser353 each carry phosphoserine. Positions 299 to 321 are enriched in low complexity; that stretch reads QQSARQYSNNANNNAKSPKNRSS. Residues 365-383 show a composition bias toward low complexity; the sequence is PSFPLSSSLRSSANLASNP. Residues 384–398 are compositionally biased toward polar residues; sequence ELATQTPLSTSSSYT. Ser439 is modified (phosphoserine).

It to yeast VHS2.

Its subcellular location is the cytoplasm. The protein is Protein MLF3 (MLF3) of Saccharomyces cerevisiae (strain ATCC 204508 / S288c) (Baker's yeast).